The sequence spans 269 residues: Ice-binding protein (269 aa).

Residues 1–24 (MLKINRKYAIILAIVAFSSFQTEA) form the signal peptide. 7 consecutive short sequence motifs (probable ice-binding motif (T/S-X-T)) follow at residues 45–47 (TVT), 65–67 (SAT), 128–130 (SAQ), 154–156 (TLT), 180–182 (SAT), 198–200 (SIT), and 218–220 (AVT). Positions 240–263 (VPEPDSSLAVLGSGLVSLLFAFRK) are PEP C-terminal anchor. The helical transmembrane segment at 245–261 (SSLAVLGSGLVSLLFAF) threads the bilayer.

Belongs to the ice-binding protein family.

The protein resides in the cell outer membrane. A probable ice-binding protein that has ice-structuring activities in vitro. Thought not to anchor the cyanobacterium to ice surfaces, as its habitat is shallow puddles fed by glacier meltwater. The sequence is that of Ice-binding protein from Nostoc sp. (strain HG1).